The primary structure comprises 228 residues: Large ribosomal subunit protein uL1 (228 aa).

This sequence belongs to the universal ribosomal protein uL1 family. In terms of assembly, part of the 50S ribosomal subunit.

In terms of biological role, binds directly to 23S rRNA. The L1 stalk is quite mobile in the ribosome, and is involved in E site tRNA release. Functionally, protein L1 is also a translational repressor protein, it controls the translation of the L11 operon by binding to its mRNA. In Clavibacter michiganensis subsp. michiganensis (strain NCPPB 382), this protein is Large ribosomal subunit protein uL1.